A 316-amino-acid polypeptide reads, in one-letter code: ATP synthase gamma chain (316 aa).

It belongs to the ATPase gamma chain family. F-type ATPases have 2 components, CF(1) - the catalytic core - and CF(0) - the membrane proton channel. CF(1) has five subunits: alpha(3), beta(3), gamma(1), delta(1), epsilon(1). CF(0) has three main subunits: a, b and c.

The protein localises to the cellular thylakoid membrane. Functionally, produces ATP from ADP in the presence of a proton gradient across the membrane. The gamma chain is believed to be important in regulating ATPase activity and the flow of protons through the CF(0) complex. This Parasynechococcus marenigrum (strain WH8102) protein is ATP synthase gamma chain.